The primary structure comprises 614 residues: uncharacterized protein (614 aa).

The disordered stretch occupies residues 23-68 (YPIPSHNGDGESEKNSSDSTSSKVNAKVTSSLQGAPSTNDENSVSP). Residues 49–68 (KVTSSLQGAPSTNDENSVSP) show a composition bias toward polar residues.

This sequence to C.trachomatis CT875.

This is an uncharacterized protein from Chlamydia muridarum (strain MoPn / Nigg).